The chain runs to 189 residues: MRKIGIIGGTFDPPHYGHLLIANEVYHALNLEEVWFLPNQIPPHKQGRNITSVESRLQMLELATEEEEHFSICLEELSRKGPSYTYDTMLQLTKKHPDVQFHFIIGGDMVEYLPKWYNIEALLDLVTFVGVARPGYTLHTPYPITTVEIPEFAVSSSLLRERYKEKKTCKYLLPEKVQVYIERNGLYES.

This sequence belongs to the NadD family.

It carries out the reaction nicotinate beta-D-ribonucleotide + ATP + H(+) = deamido-NAD(+) + diphosphate. It functions in the pathway cofactor biosynthesis; NAD(+) biosynthesis; deamido-NAD(+) from nicotinate D-ribonucleotide: step 1/1. Functionally, catalyzes the reversible adenylation of nicotinate mononucleotide (NaMN) to nicotinic acid adenine dinucleotide (NaAD). The polypeptide is Probable nicotinate-nucleotide adenylyltransferase (Bacillus cereus (strain Q1)).